Reading from the N-terminus, the 402-residue chain is Protochlorophyllide reductase B, chloroplastic (402 aa).

The protein belongs to the short-chain dehydrogenases/reductases (SDR) family. POR subfamily.

The protein resides in the plastid. It localises to the chloroplast. It carries out the reaction chlorophyllide a + NADP(+) = protochlorophyllide a + NADPH + H(+). It participates in porphyrin-containing compound metabolism; chlorophyll biosynthesis. Phototransformation of protochlorophyllide (Pchlide) to chlorophyllide (Chlide). The protein is Protochlorophyllide reductase B, chloroplastic (PORB) of Oryza sativa subsp. japonica (Rice).